The primary structure comprises 218 residues: Glutathione S-transferase U24 (218 aa).

Positions 3-82 constitute a GST N-terminal domain; that stretch reads DEVILLDFWA…YIDETWPDNN (80 aa). Residues 13 to 14, 39 to 40, 53 to 54, and 66 to 67 each bind glutathione; these read SM, NK, KI, and ES. One can recognise a GST C-terminal domain in the interval 88-215; sequence DPYKRAHAKF…TFISERRKKL (128 aa). Threonine 148 is modified (phosphothreonine).

The protein belongs to the GST superfamily. Tau family.

It localises to the cytoplasm. The protein localises to the cytosol. It catalyses the reaction RX + glutathione = an S-substituted glutathione + a halide anion + H(+). Functionally, may be involved in the conjugation of reduced glutathione to a wide number of exogenous and endogenous hydrophobic electrophiles and have a detoxification role against certain herbicides. This Arabidopsis thaliana (Mouse-ear cress) protein is Glutathione S-transferase U24 (GSTU24).